Consider the following 362-residue polypeptide: Tyrosine-protein kinase SRK2 (362 aa).

The region spanning 1-70 is the SH2 domain; the sequence is TFLVRESESK…GLCVNLRQPC (70 aa). The region spanning 95–348 is the Protein kinase domain; that stretch reads ITLIRKLGAG…ALQWRLEDFF (254 aa). Residues 101-109 and Lys123 each bind ATP; that span reads LGAGQFGEV. Asp214 functions as the Proton acceptor in the catalytic mechanism.

The protein belongs to the protein kinase superfamily. Tyr protein kinase family.

It is found in the cytoplasm. It catalyses the reaction L-tyrosyl-[protein] + ATP = O-phospho-L-tyrosyl-[protein] + ADP + H(+). The sequence is that of Tyrosine-protein kinase SRK2 (SRK2) from Spongilla lacustris (Freshwater sponge).